A 419-amino-acid chain; its full sequence is UDP-N-acetylglucosamine 1-carboxyvinyltransferase 2 (419 aa).

24–25 is a phosphoenolpyruvate binding site; it reads KN. Residue Arg94 coordinates UDP-N-acetyl-alpha-D-glucosamine. Catalysis depends on Cys118, which acts as the Proton donor. 2-(S-cysteinyl)pyruvic acid O-phosphothioketal is present on Cys118. Residues 123–127, Asp307, and Ile329 contribute to the UDP-N-acetyl-alpha-D-glucosamine site; that span reads RPIDQ.

The protein belongs to the EPSP synthase family. MurA subfamily.

It is found in the cytoplasm. The catalysed reaction is phosphoenolpyruvate + UDP-N-acetyl-alpha-D-glucosamine = UDP-N-acetyl-3-O-(1-carboxyvinyl)-alpha-D-glucosamine + phosphate. Its pathway is cell wall biogenesis; peptidoglycan biosynthesis. Functionally, cell wall formation. Adds enolpyruvyl to UDP-N-acetylglucosamine. The chain is UDP-N-acetylglucosamine 1-carboxyvinyltransferase 2 from Staphylococcus epidermidis (strain ATCC 35984 / DSM 28319 / BCRC 17069 / CCUG 31568 / BM 3577 / RP62A).